Reading from the N-terminus, the 441-residue chain is Tol-Pal system protein TolB (441 aa).

Positions 1-39 (MPAMTPAFRRADLTGFLRTYGAALILLLAAMLAWQPAQA) are cleaved as a signal peptide.

This sequence belongs to the TolB family. The Tol-Pal system is composed of five core proteins: the inner membrane proteins TolA, TolQ and TolR, the periplasmic protein TolB and the outer membrane protein Pal. They form a network linking the inner and outer membranes and the peptidoglycan layer.

The protein localises to the periplasm. Part of the Tol-Pal system, which plays a role in outer membrane invagination during cell division and is important for maintaining outer membrane integrity. This is Tol-Pal system protein TolB from Bordetella parapertussis (strain 12822 / ATCC BAA-587 / NCTC 13253).